The chain runs to 416 residues: MNVYTVSQLNEQIKNLLESHFVEVYVEGEVSRPTYHTSGHLYFSLKDEKSVIRCVMFRSALAKVPFRVEDGQKLIVAGKIGVYKPRGEYQLYATELHPSGVGSLQLAFEQLKAKLEKKGYFASELKKPLPDFIQTIALVTSQTGAALQDMLRIIQNRWPLVKVYVVDTLVQGSDAAPMIARSIAYADGLGVDVIVVGRGGGSLEDLWPFNEEIVADAIFEAKTPIVSAVGHEIDFLISDFVADLRAPTPSAAMEMILPDRQEMLMHLDLLMQRLTKRMQTILQLKTQELGHLQNSLFQLSPQKRLEFYEKEITIMNERMNETITAILKNSSHEIPHLKALFDQKIEWIWKQKKQDLTSLQQKLTMTMEAKKIPKNSAQMVKNGKPVSLEDIDVGDEVELQDVHYKALAKILSKDAL.

It belongs to the XseA family. As to quaternary structure, heterooligomer composed of large and small subunits.

It localises to the cytoplasm. It carries out the reaction Exonucleolytic cleavage in either 5'- to 3'- or 3'- to 5'-direction to yield nucleoside 5'-phosphates.. In terms of biological role, bidirectionally degrades single-stranded DNA into large acid-insoluble oligonucleotides, which are then degraded further into small acid-soluble oligonucleotides. This chain is Exodeoxyribonuclease 7 large subunit, found in Nitratiruptor sp. (strain SB155-2).